A 462-amino-acid chain; its full sequence is Fumarate hydratase class II (462 aa).

Residues S97–T99, H127–D130, S137–N139, and T185 each bind substrate. H186 (proton donor/acceptor) is an active-site residue. S316 is a catalytic residue. Residues S317 and K322 to N324 contribute to the substrate site.

Belongs to the class-II fumarase/aspartase family. Fumarase subfamily. In terms of assembly, homotetramer.

It is found in the cytoplasm. The enzyme catalyses (S)-malate = fumarate + H2O. Its pathway is carbohydrate metabolism; tricarboxylic acid cycle; (S)-malate from fumarate: step 1/1. Involved in the TCA cycle. Catalyzes the stereospecific interconversion of fumarate to L-malate. This is Fumarate hydratase class II from Bacillus subtilis (strain 168).